The chain runs to 235 residues: 1-Cys peroxiredoxin (235 aa).

The 175-residue stretch at 5–179 folds into the Thioredoxin domain; sequence ILLGDKFPDF…ILRVVDSLQL (175 aa). Cys-49 is an active-site residue. Cys-49 functions as the Cysteine sulfenic acid (-SOH) intermediate in the catalytic mechanism.

The protein belongs to the peroxiredoxin family. Prx6 subfamily.

Its subcellular location is the cytoplasm. It carries out the reaction a hydroperoxide + [protein]-dithiol = [protein]-disulfide + an alcohol + H2O. Thiol-specific peroxidase that catalyzes the reduction of hydrogen peroxide and organic hydroperoxides to water and alcohols, respectively. Plays a role in cell protection against oxidative stress by detoxifying peroxides. This Dirofilaria immitis (Canine heartworm) protein is 1-Cys peroxiredoxin.